Here is a 294-residue protein sequence, read N- to C-terminus: N-acetylmuramic acid 6-phosphate etherase (294 aa).

In terms of domain architecture, SIS spans 56 to 219 (TSQALKKGGR…STLSMVSVGK (164 aa)). The Proton donor role is filled by Glu84. The active site involves Glu115.

It belongs to the GCKR-like family. MurNAc-6-P etherase subfamily. Homodimer.

It catalyses the reaction N-acetyl-D-muramate 6-phosphate + H2O = N-acetyl-D-glucosamine 6-phosphate + (R)-lactate. The protein operates within amino-sugar metabolism; 1,6-anhydro-N-acetylmuramate degradation. Its pathway is amino-sugar metabolism; N-acetylmuramate degradation. It participates in cell wall biogenesis; peptidoglycan recycling. Functionally, specifically catalyzes the cleavage of the D-lactyl ether substituent of MurNAc 6-phosphate, producing GlcNAc 6-phosphate and D-lactate. Together with AnmK, is also required for the utilization of anhydro-N-acetylmuramic acid (anhMurNAc) either imported from the medium or derived from its own cell wall murein, and thus plays a role in cell wall recycling. This chain is N-acetylmuramic acid 6-phosphate etherase, found in Francisella philomiragia subsp. philomiragia (strain ATCC 25017 / CCUG 19701 / FSC 153 / O#319-036).